Consider the following 95-residue polypeptide: Aspartyl/glutamyl-tRNA(Asn/Gln) amidotransferase subunit C (95 aa).

This sequence belongs to the GatC family. Heterotrimer of A, B and C subunits.

The enzyme catalyses L-glutamyl-tRNA(Gln) + L-glutamine + ATP + H2O = L-glutaminyl-tRNA(Gln) + L-glutamate + ADP + phosphate + H(+). It carries out the reaction L-aspartyl-tRNA(Asn) + L-glutamine + ATP + H2O = L-asparaginyl-tRNA(Asn) + L-glutamate + ADP + phosphate + 2 H(+). Allows the formation of correctly charged Asn-tRNA(Asn) or Gln-tRNA(Gln) through the transamidation of misacylated Asp-tRNA(Asn) or Glu-tRNA(Gln) in organisms which lack either or both of asparaginyl-tRNA or glutaminyl-tRNA synthetases. The reaction takes place in the presence of glutamine and ATP through an activated phospho-Asp-tRNA(Asn) or phospho-Glu-tRNA(Gln). The protein is Aspartyl/glutamyl-tRNA(Asn/Gln) amidotransferase subunit C of Nitrosospira multiformis (strain ATCC 25196 / NCIMB 11849 / C 71).